A 198-amino-acid chain; its full sequence is Small ribosomal subunit protein uS4 (198 aa).

One can recognise an S4 RNA-binding domain in the interval 91-154; sequence SRLDNVVYRL…KNLNIVQEAL (64 aa).

This sequence belongs to the universal ribosomal protein uS4 family. In terms of assembly, part of the 30S ribosomal subunit. Contacts protein S5. The interaction surface between S4 and S5 is involved in control of translational fidelity.

In terms of biological role, one of the primary rRNA binding proteins, it binds directly to 16S rRNA where it nucleates assembly of the body of the 30S subunit. Functionally, with S5 and S12 plays an important role in translational accuracy. The chain is Small ribosomal subunit protein uS4 from Aster yellows witches'-broom phytoplasma (strain AYWB).